The sequence spans 197 residues: Small ribosomal subunit protein uS4B (197 aa).

Positions 88 to 150 (SRLDNMVYRM…SRKTEMFVNN (63 aa)) constitute an S4 RNA-binding domain.

It belongs to the universal ribosomal protein uS4 family. In terms of assembly, part of the 30S ribosomal subunit. Contacts protein S5. The interaction surface between S4 and S5 is involved in control of translational fidelity.

In terms of biological role, one of the primary rRNA binding proteins, it binds directly to 16S rRNA where it nucleates assembly of the body of the 30S subunit. Its function is as follows. With S5 and S12 plays an important role in translational accuracy. This Clostridium perfringens (strain ATCC 13124 / DSM 756 / JCM 1290 / NCIMB 6125 / NCTC 8237 / Type A) protein is Small ribosomal subunit protein uS4B.